The following is a 487-amino-acid chain: 3-octaprenyl-4-hydroxybenzoate carboxy-lyase (487 aa).

Mn(2+) is bound at residue N172. Prenylated FMN-binding positions include I175–R177, R189–L191, and R194–G195. E238 contributes to the Mn(2+) binding site. D287 (proton donor) is an active-site residue.

The protein belongs to the UbiD family. In terms of assembly, homohexamer. Requires prenylated FMN as cofactor. It depends on Mn(2+) as a cofactor.

The protein resides in the cell membrane. It carries out the reaction a 4-hydroxy-3-(all-trans-polyprenyl)benzoate + H(+) = a 2-(all-trans-polyprenyl)phenol + CO2. The protein operates within cofactor biosynthesis; ubiquinone biosynthesis. Its function is as follows. Catalyzes the decarboxylation of 3-octaprenyl-4-hydroxy benzoate to 2-octaprenylphenol, an intermediate step in ubiquinone biosynthesis. This is 3-octaprenyl-4-hydroxybenzoate carboxy-lyase from Actinobacillus pleuropneumoniae serotype 5b (strain L20).